Reading from the N-terminus, the 412-residue chain is Phosphoglycerate kinase (412 aa).

Residues 22 to 24 (DFN), Arg-37, 60 to 63 (HLGK), Arg-120, and Arg-172 contribute to the substrate site. ATP is bound by residues Lys-223, Gly-310, Glu-341, and 368–371 (GGDS).

The protein belongs to the phosphoglycerate kinase family. In terms of assembly, monomer.

The protein localises to the cytoplasm. The catalysed reaction is (2R)-3-phosphoglycerate + ATP = (2R)-3-phospho-glyceroyl phosphate + ADP. It participates in carbohydrate degradation; glycolysis; pyruvate from D-glyceraldehyde 3-phosphate: step 2/5. This chain is Phosphoglycerate kinase, found in Spiroplasma citri.